A 315-amino-acid chain; its full sequence is Pantothenate kinase (315 aa).

94–101 contacts ATP; that stretch reads GSVAVGKS.

It belongs to the prokaryotic pantothenate kinase family.

Its subcellular location is the cytoplasm. The catalysed reaction is (R)-pantothenate + ATP = (R)-4'-phosphopantothenate + ADP + H(+). Its pathway is cofactor biosynthesis; coenzyme A biosynthesis; CoA from (R)-pantothenate: step 1/5. The chain is Pantothenate kinase from Citrobacter koseri (strain ATCC BAA-895 / CDC 4225-83 / SGSC4696).